Here is a 258-residue protein sequence, read N- to C-terminus: Cytosolic Fe-S cluster assembly factor Nubp2 homolog (258 aa).

14-21 (GKGGVGKS) contacts ATP. Residues Cys188 and Cys191 each coordinate [4Fe-4S] cluster.

It belongs to the Mrp/NBP35 ATP-binding proteins family. NUBP2/CFD1 subfamily. Heterotetramer of 2 Nubp1 and 2 Nubp2 chains. [4Fe-4S] cluster is required as a cofactor.

It localises to the cytoplasm. Component of the cytosolic iron-sulfur (Fe/S) protein assembly (CIA) machinery. Required for maturation of extramitochondrial Fe-S proteins. The Nubp1-Nubp2 heterotetramer forms a Fe-S scaffold complex, mediating the de novo assembly of an Fe-S cluster and its transfer to target apoproteins. The polypeptide is Cytosolic Fe-S cluster assembly factor Nubp2 homolog (Drosophila pseudoobscura pseudoobscura (Fruit fly)).